A 146-amino-acid polypeptide reads, in one-letter code: Keratin-associated protein 12-2 (146 aa).

23 tandem repeats follow at residues 10-14 (CQPAC), 15-19 (CAPSP), 20-24 (CQPAC), 25-29 (CVPSS), 34-38 (CCVPV), 40-44 (CQSSV), 45-49 (CVPVS), 55-59 (CLPVS), 60-64 (CQSSV), 65-69 (CVPMS), 70-74 (FKSAV), 75-79 (CVPVS), 80-84 (CQSSV), 85-89 (CVPVS), 90-94 (CRPIV), 95-99 (CAAPS), 100-104 (CQSSL), 105-109 (CVPVS), 110-114 (CRPVV), 120-124 (CQSSG), 125-129 (CCQPS), 130-134 (CTSVL), and 135-139 (CRPIS). The tract at residues 10–139 (CQPACCAPSP…CTSVLCRPIS (130 aa)) is 23 X 5 AA approximate repeats.

It belongs to the KRTAP type 12 family. In terms of assembly, interacts with hair keratins. As to expression, restricted to a narrow region of the hair fiber cuticle, lying approximately 20 cell layers above the apex of the dermal papilla of the hair root; not detected in any other tissues.

Its function is as follows. In the hair cortex, hair keratin intermediate filaments are embedded in an interfilamentous matrix, consisting of hair keratin-associated proteins (KRTAP), which are essential for the formation of a rigid and resistant hair shaft through their extensive disulfide bond cross-linking with abundant cysteine residues of hair keratins. The matrix proteins include the high-sulfur and high-glycine-tyrosine keratins. In Homo sapiens (Human), this protein is Keratin-associated protein 12-2 (KRTAP12-2).